The chain runs to 443 residues: Probable protein S-acyltransferase 7 (443 aa).

2 consecutive transmembrane segments (helical) span residues 44–64 and 76–96; these read SLAL…IFVA and GVSI…LLLL. Positions 149–199 constitute a DHHC domain; that stretch reads KYCDTCMLYRPPRCSHCSICNNCVERFDHHCPWVGQCIGMRNYRFFFMFVF. Cysteine 179 acts as the S-palmitoyl cysteine intermediate in catalysis. Helical transmembrane passes span 193 to 213 and 237 to 257; these read FFFM…AFCW and SIVL…LTVF. Phosphoserine is present on residues serine 327 and serine 377. Over residues 382–392 the composition is skewed to basic and acidic residues; it reads ATVDEQSDRPS. The disordered stretch occupies residues 382–443; it reads ATVDEQSDRP…SGLVTENRPT (62 aa). At serine 406 the chain carries Phosphoserine.

The protein belongs to the DHHC palmitoyltransferase family.

The protein resides in the cell membrane. It carries out the reaction L-cysteinyl-[protein] + hexadecanoyl-CoA = S-hexadecanoyl-L-cysteinyl-[protein] + CoA. In terms of biological role, palmitoyl acyltransferase. This chain is Probable protein S-acyltransferase 7 (PAT07), found in Arabidopsis thaliana (Mouse-ear cress).